The following is a 382-amino-acid chain: Intermediate transcription factor 3 large subunit (382 aa).

This sequence belongs to the orthopoxvirus OPG150 family. In terms of assembly, heterodimerizes with protein A8 to form the virus intermediate transcription factor (VITF)-3.

Its function is as follows. Acts with RNA polymerase to initiate transcription from intermediate gene promoters. The protein is Intermediate transcription factor 3 large subunit (OPG150) of Bos taurus (Bovine).